Reading from the N-terminus, the 563-residue chain is Zinc finger CCHC domain-containing protein 7 (563 aa).

Disordered stretches follow at residues Ser41 to Ala64 and Ser133 to Ser157. Polar residues predominate over residues Ser133–Pro142. The span at Gln143 to Ser157 shows a compositional bias: low complexity. 5 CCHC-type zinc fingers span residues Val265–Val282, Pro287–Ser304, Arg305–Glu322, Lys328–Glu345, and Val372–Glu389. Residues Lys443 to Asp494 form a disordered region. Residues Pro449 to Arg463 are compositionally biased toward basic residues. Residues Lys464–Lys476 show a composition bias toward basic and acidic residues. The span at Gln477–Ser486 shows a compositional bias: basic residues.

As to quaternary structure, component of a nucleolar TRAMP-like complex, an ATP-dependent exosome regulatory complex consisting of a helicase (MTREX), an oligadenylate polymerase (PAPD5 or PAPD7), and a substrate specific RNA-binding factor (ZCCHC7 or ZCCHC8). Several TRAMP-like complexes exist with specific compositions and are associated with nuclear, or nucleolar RNA exosomes.

Its subcellular location is the nucleus. It is found in the nucleolus. The sequence is that of Zinc finger CCHC domain-containing protein 7 (zcchc7) from Xenopus laevis (African clawed frog).